The primary structure comprises 619 residues: Adagio protein 3 (619 aa).

Residues 44–123 form the PAS domain; it reads VGMFYYPMTP…SEIRRCLEEG (80 aa). Cys-91 bears the S-4a-FMN cysteine mark. Positions 127 to 168 constitute a PAC domain; it reads QGELLNFRKDGTPLVNRLRLAPIRDDDGTITHVIGIQVFSET. The region spanning 211 to 257 is the F-box domain; the sequence is ILQLSDEVLAHNILSRLTPRDVASIGSACRRLRQLTKNESVRKMVCQ. Kelch repeat units lie at residues 304–354, 357–404, 409–457, 462–513, and 523–571; these read SRCN…TSSP, RWGH…AGGT, RSWH…PTSW, RLGH…ECSA, and RLDH…NVPG.

This sequence belongs to the ADAGIO family. Interacts with ADO1 (via Kelch repeats), ADO2 (via Kelch repeats), SKP1A/ASK1, SKP1B/ASK2, ASK3, SKP1K/ASK11, ASK12, ASK13 and SKP1N/ASK14. Interacts (via Kelch repeats) with CDF1, CDF2 and CDF3. Interacts (via N-terminus) with CO and GI (via N-terminus) in a blue-light-dependent manner. Post-translationally, FMN binds covalently to cysteine after exposure to blue light and is reversed in the dark. As to expression, highly expressed in stomata and leaves and to a lower extent in seeds, roots, rosettes, stems and siliques. Also present in sepals and anther filaments.

Its subcellular location is the nucleus. The protein localises to the cytoplasm. Its pathway is protein modification; protein ubiquitination. Functionally, component of an E3 ubiquitin ligase complex that plays a central role in blue light-dependent circadian cycles. Acts as a blue light photoreceptor, due to the presence of FMN, that mediates light-regulated protein degradation of critical clock components by targeting them to the proteasome complex. The SCF(ADO3) E3 ubiquitin ligase complex is involved in the regulation of circadian clock-dependent processes including transition to flowering time, hypocotyl elongation, cotyledons and leaf movement rhythms. Forms a complex with 'GIGANTEA' (GI) to regulate 'CONSTANS' (CO) expression. Promotes CO expression during the light period of long days by decreasing the stability of CDF1 and CDF2 and by interacting directly with the CO protein and stabilizing it. ADO3 function is mainly GI dependent. Does not act as a regulator of CDF1 transcription. The interactions of ADO1/ZTL and ADO2 with ADO3 prevent its interaction with CDF1. The chain is Adagio protein 3 (ADO3) from Arabidopsis thaliana (Mouse-ear cress).